The sequence spans 136 residues: Putative pre-16S rRNA nuclease (136 aa).

It belongs to the YqgF nuclease family.

Its subcellular location is the cytoplasm. Its function is as follows. Could be a nuclease involved in processing of the 5'-end of pre-16S rRNA. In Francisella tularensis subsp. tularensis (strain FSC 198), this protein is Putative pre-16S rRNA nuclease.